Reading from the N-terminus, the 391-residue chain is Ferrochelatase (391 aa).

His196 and Glu281 together coordinate Fe cation.

Belongs to the ferrochelatase family.

It is found in the cytoplasm. The catalysed reaction is heme b + 2 H(+) = protoporphyrin IX + Fe(2+). It functions in the pathway porphyrin-containing compound metabolism; protoheme biosynthesis; protoheme from protoporphyrin-IX: step 1/1. Functionally, catalyzes the ferrous insertion into protoporphyrin IX. This Parasynechococcus marenigrum (strain WH8102) protein is Ferrochelatase.